Here is a 261-residue protein sequence, read N- to C-terminus: MAPSIATVKIARDMVLPLRIFVNRKQILQTNDKTSNKSNATIFEAPLLSNNSIICLKSPNTRIYLSQQDKKNLCDEIKEDLLLIVYELASPEIISSVLSKIRVGHSTDFQINVLPKLFAGADTDNAVTSHIQSVTRLAKFKYKLHYKHKWELDIFINSIKKIANLRHYLMFQTLTLNGFSLNAGPKTLLARKIEKQPQVPNLLIENGDADALDTPVEEDIKPVIEFMYKPVINLGEIIDVHVLHRPRRHKVRTQSKQPQEE.

Interacts with MSH2, MSH3, RAD1, RAD10, RAD51 and RAD52.

It localises to the nucleus. Catalyzes 3'-non-homologous tail removal of RAD1/RAD10-dependent single-strand annealing recombination intermediates. Plays a key role in targeting RAD1/RAD10 complex to 3'-flap cleavage substrate in recombination. Also contributes to the integrity of ribosomal DNA arrays. In Saccharomyces cerevisiae (strain ATCC 204508 / S288c) (Baker's yeast), this protein is Single-strand annealing weakened protein 1 (SAW1).